The chain runs to 629 residues: 1-deoxy-D-xylulose-5-phosphate synthase (629 aa).

Residues His-79 and 119–121 (SHA) each bind thiamine diphosphate. Position 150 (Asp-150) interacts with Mg(2+). Residues 151–152 (GS), Asn-180, Tyr-292, and Glu-377 contribute to the thiamine diphosphate site. Asn-180 contributes to the Mg(2+) binding site.

It belongs to the transketolase family. DXPS subfamily. Homodimer. The cofactor is Mg(2+). Thiamine diphosphate serves as cofactor.

It carries out the reaction D-glyceraldehyde 3-phosphate + pyruvate + H(+) = 1-deoxy-D-xylulose 5-phosphate + CO2. The protein operates within metabolic intermediate biosynthesis; 1-deoxy-D-xylulose 5-phosphate biosynthesis; 1-deoxy-D-xylulose 5-phosphate from D-glyceraldehyde 3-phosphate and pyruvate: step 1/1. Functionally, catalyzes the acyloin condensation reaction between C atoms 2 and 3 of pyruvate and glyceraldehyde 3-phosphate to yield 1-deoxy-D-xylulose-5-phosphate (DXP). The chain is 1-deoxy-D-xylulose-5-phosphate synthase from Tropheryma whipplei (strain TW08/27) (Whipple's bacillus).